An 80-amino-acid polypeptide reads, in one-letter code: Probable Rubredoxin-1 (80 aa).

Positions 19–72 (YRKYKCKVCGWVYDPLKGDPSQNIPPKTPFEELPDTWICPVCRGKVGKESFEPL) constitute a Rubredoxin-like domain. Cys24, Cys27, Cys57, and Cys60 together coordinate Fe cation.

This sequence belongs to the rubredoxin family. Requires Fe(3+) as cofactor.

In terms of biological role, rubredoxin is a small nonheme, iron protein lacking acid-labile sulfide. Its single Fe, chelated to 4 Cys, functions as an electron acceptor and may also stabilize the conformation of the molecule. In Methanocaldococcus jannaschii (strain ATCC 43067 / DSM 2661 / JAL-1 / JCM 10045 / NBRC 100440) (Methanococcus jannaschii), this protein is Probable Rubredoxin-1.